The chain runs to 579 residues: Deleted in azoospermia protein 4 (579 aa).

Polar residues predominate over residues 1–10; the sequence is MSAANPETPN. The segment at 1-27 is disordered; that stretch reads MSAANPETPNSTISREASTQSSSAAAS. Positions 11-27 are enriched in low complexity; it reads STISREASTQSSSAAAS. Residues 40 to 115 form the RRM 1 domain; that stretch reads NTVFVGGIDA…KKLKLGPAIR (76 aa). The span at 163–175 shows a compositional bias: polar residues; sequence QHVQSAANPETPN. A disordered region spans residues 163 to 192; the sequence is QHVQSAANPETPNSTISREASTQSSSAAAS. A compositionally biased stretch (low complexity) spans 176 to 192; sequence STISREASTQSSSAAAS. Positions 205-280 constitute an RRM 2 domain; sequence NTVFVGGIDA…KKLKLGPAIR (76 aa). DAZ domains are found at residues 332 to 355, 356 to 379, 380 to 403, 404 to 427, 428 to 451, 452 to 475, 476 to 499, 500 to 523, and 524 to 547; these read AYSA…YNYQ, EYPT…YNYQ, PFPA…YNYQ, and AFPA…YNYQ.

The protein belongs to the RRM DAZ family. As to quaternary structure, forms a heterodimer with BOLL and DAZL. Interacts with PUM2, DAZAP1, DAZAP2, DZIP1 and DZIP3. As to expression, testis-specific. Expression restricted to premeiotic germ cells, particularly in spermatogonia (at protein level).

It is found in the cytoplasm. Its subcellular location is the nucleus. RNA-binding protein that plays an essential role in spermatogenesis. May act by binding to the 3'-UTR of mRNAs and regulating their translation. The protein is Deleted in azoospermia protein 4 (DAZ4) of Homo sapiens (Human).